The following is a 956-amino-acid chain: DNA repair endonuclease UVH1 (956 aa).

The Nuclear localization signal signature appears at 256-272; it reads RRQLDPIWHTLGKRTKQ. 3 disordered regions span residues 343 to 363, 516 to 593, and 697 to 718; these read HVKN…SVEA, TTDM…RPSG, and SSTE…GGRK. The span at 697 to 711 shows a compositional bias: polar residues; that stretch reads SSTEFPASSTQNSLT. Positions 725 to 805 constitute an ERCC4 domain; sequence QVIVDMREFM…IPVLLIEFSQ (81 aa).

It belongs to the XPF family. Heterodimer with ERCC1/RAD10. In terms of tissue distribution, isoform 1 and isoform 2 are widely expressed, predominantly in flowers, meristems and stems. Isoform 3 is detected at low levels.

Its subcellular location is the nucleus. Its function is as follows. Seems to be involved in nucleotide excision repair (NER) of damaged DNA (dark repair mechanism). Involved in repair of UV light, and probably oxidative damage. The UVH1/RAD1-ERCC1/RAD10 complex may act as an endonuclease making DNA incision 5' to the lesion site. In vitro, is implicated in double strand breaks (DSBs) repair and is required for homologous recombination in the presence of non-homologous overhangs. May mediate the induction of a DNA-damage sensitive cell-cycle checkpoint during the G2 phase. The protein is DNA repair endonuclease UVH1 (UVH1) of Arabidopsis thaliana (Mouse-ear cress).